We begin with the raw amino-acid sequence, 294 residues long: ATP synthase gamma chain (294 aa).

This sequence belongs to the ATPase gamma chain family. In terms of assembly, F-type ATPases have 2 components, CF(1) - the catalytic core - and CF(0) - the membrane proton channel. CF(1) has five subunits: alpha(3), beta(3), gamma(1), delta(1), epsilon(1). CF(0) has three main subunits: a, b and c.

Its subcellular location is the cell inner membrane. Its function is as follows. Produces ATP from ADP in the presence of a proton gradient across the membrane. The gamma chain is believed to be important in regulating ATPase activity and the flow of protons through the CF(0) complex. This is ATP synthase gamma chain from Campylobacter jejuni subsp. jejuni serotype O:23/36 (strain 81-176).